We begin with the raw amino-acid sequence, 521 residues long: Cytochrome P450 monooxygenase gloO (521 aa).

A signal peptide spans 1 to 26 (MIAALFTTNLQLGAVGVFIFALLAFA). Position 464 (cysteine 464) interacts with heme.

This sequence belongs to the cytochrome P450 family. It depends on heme as a cofactor.

It functions in the pathway mycotoxin biosynthesis. Cytochrome P450 monooxygenase; part of the gene cluster that mediates the biosynthesis of pneumocandins, lipohexapeptides of the echinocandin family that prevent fungal cell wall formation by non-competitive inhibition of beta-1,3-glucan synthase. The 10,12-dimethylmyristoyl side chain is synthesized by the reducing polyketide synthase gloL/GLPKS4. The thioesterase gloN/GLHYD exclusively interacts with gloL/GLPKS4 to maintain turnover of the polyketide side chain. The 10R,12S-dimethylmyristic acid is then transferred to the first thiolation domain of the nonribosomal peptide synthetase gloA/GLNRPS4 by the acyl-AMP ligase gloD/GLligase, followed by its acylation to L-ornithine to trigger elongation of the cyclic hexapeptide. L-ornithine, 4R-hydroxyl-L-proline (generated from L-proline by the dioxygenase gloF/GLOXY2), 3S-hydroxyl-L-homotyrosine (generated by gloG/GLHtyB, gloH/GLHtyA, gloI/GLHtyC, gloJ/GLHtyD and hydroxylated at C-3 by the dioxygenase gloM/GLOXY1), 3R-hydroxyl-L-glutamine (generated from L-glutamine probably by the dioxygenase gloE/GLOXY3) and 3S-hydroxyl-L-proline (generated from L-proline by the dioxygenase gloF/GLOXY2 to yield pneumocandin B0), or 3S-hydroxyl-4S-methyl-L-proline (generated from L-leucine by the dioxygenase gloC/GLOXY4 to yield pneumocandin A0) are sequentially added to the growing chain. The last C domain of gloA/GLNRPS4 is proposed to be responsible for cyclization by condensation to form the peptide bond between L-ornithine and 3S-hydroxyl-4S-methyl-L-proline (for pneumocandin A0) or 3S-hydroxyl-L-proline (for pneumocandin B0). Finally, the subsequent C-4 hydroxylation of 3S-hydroxyl-L-homotyrosine and L-ornithine dihydroxylation at C-4 and C-5 are performed by the cytochrome P450 monooxygenases gloP/GLP450-1 and gloO/GLP450-2, respectively. This Glarea lozoyensis (strain ATCC 20868 / MF5171) protein is Cytochrome P450 monooxygenase gloO.